A 158-amino-acid chain; its full sequence is MNVVQGNIESKNAKIAIVVSRFNSFVVESLLDGAVDTLKRFGQVADDNITVIKVPGAVELPLAARRVAASGKFDGIISLGAVIRGGTPHFDLVAGECNKGLAQVALEYDIPVSFGVLTTDTIEQAIERSGTKAGNKGGEAALGLLEMVNVLQALEEQL.

5-amino-6-(D-ribitylamino)uracil-binding positions include Phe22, 57–59 (AVE), and 81–83 (AVI). Residue 86–87 (GT) participates in (2S)-2-hydroxy-3-oxobutyl phosphate binding. The active-site Proton donor is His89. Phe114 contacts 5-amino-6-(D-ribitylamino)uracil. (2S)-2-hydroxy-3-oxobutyl phosphate is bound at residue Arg128.

It belongs to the DMRL synthase family. As to quaternary structure, forms an icosahedral capsid composed of 60 subunits, arranged as a dodecamer of pentamers.

It catalyses the reaction (2S)-2-hydroxy-3-oxobutyl phosphate + 5-amino-6-(D-ribitylamino)uracil = 6,7-dimethyl-8-(1-D-ribityl)lumazine + phosphate + 2 H2O + H(+). It functions in the pathway cofactor biosynthesis; riboflavin biosynthesis; riboflavin from 2-hydroxy-3-oxobutyl phosphate and 5-amino-6-(D-ribitylamino)uracil: step 1/2. Its function is as follows. Catalyzes the formation of 6,7-dimethyl-8-ribityllumazine by condensation of 5-amino-6-(D-ribitylamino)uracil with 3,4-dihydroxy-2-butanone 4-phosphate. This is the penultimate step in the biosynthesis of riboflavin. This is 6,7-dimethyl-8-ribityllumazine synthase from Shewanella piezotolerans (strain WP3 / JCM 13877).